The sequence spans 316 residues: MKLSKAKQDLDHHVWKLIKLHSLQDKKILVALSGGTDSVALLRSLTKVHKKNLLGACYFHHGEDSNQEYRKEAQEFCEKLCKKLEIEFYPLRASQLAKSEAEYRELRYEALDRLKKEQGFELVATGHHRDDLLETRLIRLIRGTGAQGFAAMHVLRDGLFRPLLEISKKELKKYLREERLRSFEDPTNKALDPLRNWLREEWLKSLERRARGSTAALARSLETIAQEIENRPWGDLLGQNEAYKTQGLRRSFYLTLSPFEQKRLLAQYLFSLGKRDFSQSHLEEIQKRLDKSQKVITFKVAGCQWEVNAEQIKVQS.

Residue Ser33–Ser38 coordinates ATP.

It belongs to the tRNA(Ile)-lysidine synthase family.

The protein localises to the cytoplasm. It carries out the reaction cytidine(34) in tRNA(Ile2) + L-lysine + ATP = lysidine(34) in tRNA(Ile2) + AMP + diphosphate + H(+). Ligates lysine onto the cytidine present at position 34 of the AUA codon-specific tRNA(Ile) that contains the anticodon CAU, in an ATP-dependent manner. Cytidine is converted to lysidine, thus changing the amino acid specificity of the tRNA from methionine to isoleucine. In Bdellovibrio bacteriovorus (strain ATCC 15356 / DSM 50701 / NCIMB 9529 / HD100), this protein is tRNA(Ile)-lysidine synthase.